The following is a 205-amino-acid chain: Small ribosomal subunit protein uS4 (205 aa).

The disordered stretch occupies residues 18–46 (NIWGRPKSPVNRREYGPGQHGQRRKGKLS). One can recognise an S4 RNA-binding domain in the interval 94-154 (RRLDTVVFRA…EASKQLAVVL (61 aa)).

The protein belongs to the universal ribosomal protein uS4 family. In terms of assembly, part of the 30S ribosomal subunit. Contacts protein S5. The interaction surface between S4 and S5 is involved in control of translational fidelity.

Its function is as follows. One of the primary rRNA binding proteins, it binds directly to 16S rRNA where it nucleates assembly of the body of the 30S subunit. Functionally, with S5 and S12 plays an important role in translational accuracy. The sequence is that of Small ribosomal subunit protein uS4 from Bradyrhizobium sp. (strain ORS 278).